The following is a 147-amino-acid chain: Hemoglobin subunit epsilon (147 aa).

Residues 3–147 (HFTAEEKAAV…VAIALAHKYH (145 aa)) enclose the Globin domain. A phosphoserine mark is found at Ser14 and Ser51. Positions 64 and 93 each coordinate heme b.

This sequence belongs to the globin family. In terms of assembly, heterotetramer of two alpha chains and two epsilon chains in early embryonic hemoglobin Gower-2; two zeta chains and two epsilon chains in early embryonic hemoglobin Gower-1. In terms of tissue distribution, red blood cells.

In terms of biological role, the epsilon chain is a beta-type chain of early mammalian embryonic hemoglobin. The protein is Hemoglobin subunit epsilon (HBE1) of Pan troglodytes (Chimpanzee).